The following is a 277-amino-acid chain: Large ribosomal subunit protein uL2 (277 aa).

Residues 223–277 (VTMNPVDHPHGGGEGRTSGGRHPVTPWGKPTKGMKTRSNKATDKFIVTSRHKRKK) are disordered.

Belongs to the universal ribosomal protein uL2 family. As to quaternary structure, part of the 50S ribosomal subunit. Forms a bridge to the 30S subunit in the 70S ribosome.

Functionally, one of the primary rRNA binding proteins. Required for association of the 30S and 50S subunits to form the 70S ribosome, for tRNA binding and peptide bond formation. It has been suggested to have peptidyltransferase activity; this is somewhat controversial. Makes several contacts with the 16S rRNA in the 70S ribosome. The polypeptide is Large ribosomal subunit protein uL2 (Azorhizobium caulinodans (strain ATCC 43989 / DSM 5975 / JCM 20966 / LMG 6465 / NBRC 14845 / NCIMB 13405 / ORS 571)).